The sequence spans 278 residues: Indole-3-glycerol phosphate synthase (278 aa).

It belongs to the TrpC family.

It carries out the reaction 1-(2-carboxyphenylamino)-1-deoxy-D-ribulose 5-phosphate + H(+) = (1S,2R)-1-C-(indol-3-yl)glycerol 3-phosphate + CO2 + H2O. Its pathway is amino-acid biosynthesis; L-tryptophan biosynthesis; L-tryptophan from chorismate: step 4/5. The chain is Indole-3-glycerol phosphate synthase from Pseudomonas aeruginosa (strain LESB58).